The sequence spans 344 residues: N-acetyl-gamma-glutamyl-phosphate reductase (344 aa).

Cys-149 is a catalytic residue.

It belongs to the NAGSA dehydrogenase family. Type 1 subfamily.

The protein localises to the cytoplasm. The catalysed reaction is N-acetyl-L-glutamate 5-semialdehyde + phosphate + NADP(+) = N-acetyl-L-glutamyl 5-phosphate + NADPH + H(+). It functions in the pathway amino-acid biosynthesis; L-arginine biosynthesis; N(2)-acetyl-L-ornithine from L-glutamate: step 3/4. In terms of biological role, catalyzes the NADPH-dependent reduction of N-acetyl-5-glutamyl phosphate to yield N-acetyl-L-glutamate 5-semialdehyde. This chain is N-acetyl-gamma-glutamyl-phosphate reductase, found in Shouchella clausii (strain KSM-K16) (Alkalihalobacillus clausii).